The sequence spans 274 residues: Dehydration-responsive element-binding protein 2A (274 aa).

Composition is skewed to basic and acidic residues over residues 1–10 (MERGEGRRGD) and 35–50 (KWWK…ENSS). The segment at 1–75 (MERGEGRRGD…KGGPENSNCA (75 aa)) is disordered. Residues 75–132 (AYRGVRQRTWGKWVAEIREPNRGRRLWLGSFPTALEAAHAYDEAARAMYGPTARVNFA) constitute a DNA-binding region (AP2/ERF).

This sequence belongs to the AP2/ERF transcription factor family. ERF subfamily.

Its subcellular location is the nucleus. Its function is as follows. Transcriptional activator that binds specifically to the DNA sequence 5'-[AG]CCGAC-3' of the cis-acting dehydration-responsive element (DRE). Binding to the C-repeat/DRE element mediates high salinity- and dehydration-inducible transcription. In Oryza sativa subsp. japonica (Rice), this protein is Dehydration-responsive element-binding protein 2A (DREB2A).